We begin with the raw amino-acid sequence, 1076 residues long: Ribosome quality control complex subunit NEMF (1076 aa).

At threonine 7 the chain carries Phosphothreonine. The stretch at 296 to 359 (VDEFYSKIEG…LIEMNLQIVD (64 aa)) forms a coiled coil. Position 417 is a phosphoserine (serine 417). The segment at 420–453 (EDDDVDGDVNVEKNETEPPKGKKKKQKNKQLQKP) is disordered. Positions 429 to 439 (NVEKNETEPPK) are enriched in basic and acidic residues. A compositionally biased stretch (basic residues) spans 440 to 449 (GKKKKQKNKQ). Residues 483–514 (AAKKTQKTVEAAEKAFKSAEKKTKQTLKEVQT) are a coiled coil. Acidic residues-rich tracts occupy residues 691-710 (ISEE…EDKE) and 742-754 (LIQE…EGEY). Disordered regions lie at residues 691–715 (ISEE…HETP) and 742–972 (LIQE…DLDQ). Phosphoserine is present on residues serine 747, serine 748, and serine 763. The segment covering 755–768 (EEVRKDQDSVGEMK) has biased composition (basic and acidic residues). The segment covering 777–795 (YPDTTIDLSHLQPQRSIQK) has biased composition (polar residues). A Phosphoserine modification is found at serine 831. Residues 839-854 (LEGKDKEKESTVHIET) are compositionally biased toward basic and acidic residues. A coiled-coil region spans residues 869 to 894 (KRGQKSKMKKMKEKYKDQDEEDRELI). Positions 870–881 (RGQKSKMKKMKE) are enriched in basic residues. Residues 937-965 (DNIKKETPFLEVITHELQDFAVDDPHDDK) are compositionally biased toward basic and acidic residues.

This sequence belongs to the NEMF family. Component of the ribosome quality control complex (RQC), composed of the E3 ubiquitin ligase LTN1, TCF25 and NEMF associated with the 60S ribosomal subunit. The complex probably also contains VCP/p97 and its ubiquitin-binding cofactors. Interacts (via its N-terminus) with XPO1. As to expression, expressed in brain, heart, liver, lung, spleen, and skeletal muscle. Also expressed at lower levels in stomach and testis.

It is found in the cytoplasm. The protein resides in the cytosol. Its subcellular location is the nucleus. Its function is as follows. Key component of the ribosome quality control complex (RQC), a ribosome-associated complex that mediates the extraction of incompletely synthesized nascent chains from stalled ribosomes as well as their ubiquitin-mediated proteasomal degradation. Thereby, frees 60S subunit ribosomes from the stalled translation complex and prevents the accumulation of nascent polypeptide chains that are potentially toxic for the cell. Within the RQC complex, NEMF specifically binds stalled 60S ribosomal subunits by recognizing an exposed, nascent chain-conjugated tRNA moiety and promotes the recruitment of LTN1 to stalled 60S subunits. Following binding to stalled 60S ribosomal subunits, NEMF mediates CAT tailing by recruiting alanine-charged tRNA to the A-site and directing the elongation of stalled nascent chains independently of mRNA or 40S subunits, leading to non-templated C-terminal alanine extensions (CAT tails). Mainly recruits alanine-charged tRNAs, but can also other amino acid-charged tRNAs. CAT tailing is required to promote ubiquitination of stalled nascent chains by different E3 ubiquitin-protein ligases. In the canonical RQC pathway (RQC-L), CAT tailing facilitates LTN1-dependent ubiquitination by exposing lysine residues that would otherwise remain buried in the ribosomal exit tunnel. In the alternative RQC pathway (RQC-C) CAT tailing creates an C-degron mainly composed of alanine that is recognized by the CRL2(KLHDC10) and RCHY1/PIRH2 E3 ligases, leading to ubiquitination and degradation of stalled nascent chains. NEMF may also indirectly play a role in nuclear export. In Homo sapiens (Human), this protein is Ribosome quality control complex subunit NEMF.